A 227-amino-acid polypeptide reads, in one-letter code: Urease accessory protein UreF (227 aa).

Belongs to the UreF family. In terms of assembly, ureD, UreF and UreG form a complex that acts as a GTP-hydrolysis-dependent molecular chaperone, activating the urease apoprotein by helping to assemble the nickel containing metallocenter of UreC. The UreE protein probably delivers the nickel.

The protein resides in the cytoplasm. Its function is as follows. Required for maturation of urease via the functional incorporation of the urease nickel metallocenter. This is Urease accessory protein UreF from Actinobacillus pleuropneumoniae serotype 3 (strain JL03).